We begin with the raw amino-acid sequence, 503 residues long: Arginyl-tRNA--protein transferase 1 (503 aa).

This sequence belongs to the R-transferase family.

The protein localises to the cytoplasm. The catalysed reaction is an N-terminal L-alpha-aminoacyl-[protein] + L-arginyl-tRNA(Arg) = an N-terminal L-arginyl-L-aminoacyl-[protein] + tRNA(Arg) + H(+). In terms of biological role, involved in the post-translational conjugation of arginine to the N-terminal aspartate or glutamate of a protein. This arginylation is required for degradation of the protein via the ubiquitin pathway. Does not arginylate cysteine residues. The protein is Arginyl-tRNA--protein transferase 1 (ATE1) of Saccharomyces cerevisiae (strain ATCC 204508 / S288c) (Baker's yeast).